The chain runs to 160 residues: Tumor suppressor ARF (160 aa).

The segment at 1 to 63 is interaction with CDK5RAP3 and MDM2; sequence MGRRFVVTVR…RRGPQPHPGP (63 aa). Disordered regions lie at residues 49-74 and 90-116; these read PERI…QSGS and HPLP…GRGA.

In terms of assembly, does not interact with cyclins, CDK1, CDK2, CDK4, CDK5 or CDK6. Binds to BCL6, E2F1, HUWE1, MDM2, MYC, NPM1/B23, TOP1/TOPOI and UBE2I/UBC9. Interacts with TBRG1 and COMMD1. Interacts with CDKN2AIP and E4F1. Interacts with CDK5RAP3 and MDM2; form a ternary complex involved in regulation of p53/TP53. Interacts with NOP53; the interaction is direct and promotes ARF nucleoplasmic relocalization and ubiquitin-mediated proteasomal degradation. Interacts with TTF1 (via the N-terminal region (NRD) and a C-terminal region); the interaction is direct and inhibits the nucleolar localization of TTF1. Post-translationally, ubiquitinated in normal cells by TRIP12 via the ubiquitin fusion degradation (UFD) pathway, a process that mediates ubiquitination at the N-terminus, regardless of the absence of lysine residues. Ubiquitination leads to its proteasomal degradation. In cancer cells, however, TRIP12 is located in a different cell compartment, preventing ubiquitination and degradation. In terms of tissue distribution, widely expressed with very low levels in kidney and colon.

It is found in the nucleus. It localises to the nucleolus. Its subcellular location is the nucleoplasm. In terms of biological role, capable of inducing cell cycle arrest in G1 and G2 phases. Acts as a tumor suppressor. Binds to MDM2 and blocks its nucleocytoplasmic shuttling by sequestering it in the nucleolus. This inhibits the oncogenic action of MDM2 by blocking MDM2-induced degradation of p53 and enhancing p53-dependent transactivation and apoptosis. Also induces G2 arrest and apoptosis in a p53-independent manner by preventing the activation of cyclin B1/CDC2 complexes. Binds to BCL6 and down-regulates BCL6-induced transcriptional repression. Binds to E2F1 and MYC and blocks their transcriptional activator activity but has no effect on MYC transcriptional repression. Binds to TOP1/TOPOI and stimulates its activity. This complex binds to rRNA gene promoters and may play a role in rRNA transcription and/or maturation. Interacts with NPM1/B23 and promotes its polyubiquitination and degradation, thus inhibiting rRNA processing. Plays a role in inhibiting ribosome biogenesis, perhaps by binding to the nucleolar localization sequence of transcription termination factor TTF1, and thereby preventing nucleolar localization of TTF1. Interacts with COMMD1 and promotes its 'Lys63'-linked polyubiquitination. Interacts with UBE2I/UBC9 and enhances sumoylation of a number of its binding partners including MDM2 and E2F1. Binds to HUWE1 and represses its ubiquitin ligase activity. May play a role in controlling cell proliferation and apoptosis during mammary gland development. This chain is Tumor suppressor ARF, found in Rattus norvegicus (Rat).